Here is a 346-residue protein sequence, read N- to C-terminus: Putative D-alanine--D-lactate ligase (346 aa).

The ATP-grasp domain occupies 137-338 (YVVARSAGIA…LSEVIDRTLS (202 aa)). 163–216 (RLTYPVFVKPARSGSSFGVSKVCRPEDLATAVESARRYDTKVLIEAAVVGSEVG) is an ATP binding site. Mg(2+)-binding residues include Asp-292, Glu-305, and Asn-307.

The protein belongs to the D-alanine--D-alanine ligase family. Mg(2+) serves as cofactor. Requires Mn(2+) as cofactor.

Its subcellular location is the cell membrane. Required for resistance to glycopeptides antibiotics. D-Ala--D-Ala ligase of altered specificity which catalyzes ester bond formation between D-Ala and various D-hydroxy acids; producing a peptidoglycan which does not terminate by D-alanine but by D-lactate, thus preventing vancomycin binding. In Streptomyces coelicolor (strain ATCC BAA-471 / A3(2) / M145), this protein is Putative D-alanine--D-lactate ligase.